A 441-amino-acid polypeptide reads, in one-letter code: Vacuolar cation/proton exchanger 2 (441 aa).

Residues 1 to 69 (MSCCKVPVLI…PKNSVLNSIK (69 aa)) are Cytoplasmic-facing. Residues 70–90 (IVIFCNKLNLLLPFGPLAILV) form a helical membrane-spanning segment. Residues 91 to 97 (HYMIDSK) are Extracellular-facing. Residues 98–118 (GWVFLLTLVGITPLAERLGYA) form a helical membrane-spanning segment. Over 119–129 (TEQLACYTGPT) the chain is Cytoplasmic. A helical transmembrane segment spans residues 130–150 (VGGLLNATFGNVTELIISIFA). Residues 139–174 (GNVTELIISIFALKNGMIRVVQLTLLGSILSNMLLV) form a cation selection region. The Extracellular segment spans residues 151 to 166 (LKNGMIRVVQLTLLGS). Residues 167–187 (ILSNMLLVLGCAFFCGGLVFY) traverse the membrane as a helical segment. Residues 188-196 (QKDQVFDKG) lie on the Cytoplasmic side of the membrane. A helical transmembrane segment spans residues 197 to 217 (IATVNSGLLLMAVMGILFPAV). Residues 218–231 (LHYTHSEVHAGSSE) are Extracellular-facing. Residues 232–252 (LALSRFSSCIMLIAYAAYLFF) form a helical membrane-spanning segment. The Cytoplasmic segment spans residues 253–286 (QLKSQSNSYSPLDEESNQNEETSAEDEDPEISKW). The chain crosses the membrane as a helical span at residues 287-307 (EAIIWLSILTAWVSLLSGYLV). Topologically, residues 308-311 (DAIE) are extracellular. The helical transmembrane segment at 312–332 (GASVSWNIPIAFISTILLPIV) threads the bilayer. The Cytoplasmic segment spans residues 333 to 354 (GNAAEHAGAIMFAMKDKLDLSL). The tract at residues 333–368 (GNAAEHAGAIMFAMKDKLDLSLGVAIGSSIQISMFA) is cation selection. The chain crosses the membrane as a helical span at residues 355–375 (GVAIGSSIQISMFAVPFCVVI). At 376–384 (GWMMGQQMD) the chain is on the extracellular side. Residues 385–405 (LNFQLFETAMLFITVIVVAFF) traverse the membrane as a helical segment. Over 406-412 (LQEGSSN) the chain is Cytoplasmic. A helical membrane pass occupies residues 413-433 (YFKGLMLILCYLIVAASFFVH). Residues 434–441 (EDPHQDGI) lie on the Extracellular side of the membrane.

The protein belongs to the Ca(2+):cation antiporter (CaCA) (TC 2.A.19) family. Cation/proton exchanger (CAX) subfamily.

It is found in the vacuole membrane. Its activity is regulated as follows. Inhibited by excess of Ca(2+) and Cd(2+), Mn(2+), and Zn(2+). In terms of biological role, vacuolar cation/proton exchanger (CAX). Translocates Ca(2+) and other metal ions into vacuoles using the proton gradient formed by H(+)-ATPase and H(+)-pyrophosphatase. The sequence is that of Vacuolar cation/proton exchanger 2 (CAX2) from Arabidopsis thaliana (Mouse-ear cress).